The primary structure comprises 113 residues: Large ribosomal subunit protein uL22 (113 aa).

This sequence belongs to the universal ribosomal protein uL22 family. Part of the 50S ribosomal subunit.

In terms of biological role, this protein binds specifically to 23S rRNA; its binding is stimulated by other ribosomal proteins, e.g. L4, L17, and L20. It is important during the early stages of 50S assembly. It makes multiple contacts with different domains of the 23S rRNA in the assembled 50S subunit and ribosome. Functionally, the globular domain of the protein is located near the polypeptide exit tunnel on the outside of the subunit, while an extended beta-hairpin is found that lines the wall of the exit tunnel in the center of the 70S ribosome. This Geobacillus thermodenitrificans (strain NG80-2) protein is Large ribosomal subunit protein uL22.